We begin with the raw amino-acid sequence, 443 residues long: Squalene synthase (443 aa).

2 helical membrane-spanning segments follow: residues 291-311 (TSFN…ELVF) and 423-443 (ILLL…VRII).

This sequence belongs to the phytoene/squalene synthase family. It depends on Mg(2+) as a cofactor.

The protein localises to the endoplasmic reticulum membrane. The enzyme catalyses 2 (2E,6E)-farnesyl diphosphate + NADPH + H(+) = squalene + 2 diphosphate + NADP(+). It catalyses the reaction 2 (2E,6E)-farnesyl diphosphate + NADH + H(+) = squalene + 2 diphosphate + NAD(+). Its pathway is terpene metabolism; lanosterol biosynthesis; lanosterol from farnesyl diphosphate: step 1/3. Functionally, catalyzes the condensation of 2 two farnesyl pyrophosphate moieties to form squalene. It is the first committed enzyme of the sterol biosynthesis pathway. Required for the biosynthesis of ergosterol. The protein is Squalene synthase (ERG9) of Cyberlindnera jadinii (Torula yeast).